We begin with the raw amino-acid sequence, 97 residues long: MTKITKEEVNKVANLARLELNENEINNHAEQLEKILDYIRQLEKIDTDDVPCTTRAIEVVNVFRKDENKNSDCNEEILELGPSREDKYFKVPKIINE.

The protein belongs to the GatC family. Heterotrimer of A, B and C subunits.

The enzyme catalyses L-glutamyl-tRNA(Gln) + L-glutamine + ATP + H2O = L-glutaminyl-tRNA(Gln) + L-glutamate + ADP + phosphate + H(+). It carries out the reaction L-aspartyl-tRNA(Asn) + L-glutamine + ATP + H2O = L-asparaginyl-tRNA(Asn) + L-glutamate + ADP + phosphate + 2 H(+). In terms of biological role, allows the formation of correctly charged Asn-tRNA(Asn) or Gln-tRNA(Gln) through the transamidation of misacylated Asp-tRNA(Asn) or Glu-tRNA(Gln) in organisms which lack either or both of asparaginyl-tRNA or glutaminyl-tRNA synthetases. The reaction takes place in the presence of glutamine and ATP through an activated phospho-Asp-tRNA(Asn) or phospho-Glu-tRNA(Gln). The chain is Aspartyl/glutamyl-tRNA(Asn/Gln) amidotransferase subunit C from Prochlorococcus marinus (strain MIT 9301).